An 85-amino-acid chain; its full sequence is F(1)-ATPase inhibitor IF(1), mitochondrial (85 aa).

The transit peptide at 1–22 directs the protein to the mitochondrion; the sequence is MLPRSALARSLQLQRGVAARFY. Residues 41-84 adopt a coiled-coil conformation; that stretch reads KRERATEDFFVRQREKEQLRHLKEQLEKQRKKIDSLENKIDSMT.

Belongs to the ATPase inhibitor family. As to quaternary structure, monomer and homodimer. The protein aggregates less strongly with increasing pH.

Its subcellular location is the mitochondrion. Its function is as follows. Endogenous ATPase inhibitor, which inhibits specifically the reverse ATPase reaction of mitochondrial F(1)F(0)-type ATP synthase. It limits ATP depletion when the mitochondrial membrane potential falls below a threshold and the F(1)F(0)-ATP synthase starts hydrolyzing ATP to pump protons out of the mitochondrial matrix. Required to avoid the consumption of cellular ATP when the F(1)F(0)-ATP synthase enzyme acts as an ATP hydrolase. Functions through inserting its N-terminal part into the catalytically active F1-ATPase, thereby blocking its rotational movement and subsequently the ATP hydrolase activity. This chain is F(1)-ATPase inhibitor IF(1), mitochondrial (INH1), found in Saccharomyces cerevisiae (strain ATCC 204508 / S288c) (Baker's yeast).